Here is a 78-residue protein sequence, read N- to C-terminus: RNA-binding protein Hfq (78 aa).

Residues 10–70 (DLFLNSVRKQ…ISTIMPSQPV (61 aa)) form the Sm domain.

The protein belongs to the Hfq family. In terms of assembly, homohexamer.

Its function is as follows. RNA chaperone that binds small regulatory RNA (sRNAs) and mRNAs to facilitate mRNA translational regulation in response to envelope stress, environmental stress and changes in metabolite concentrations. Also binds with high specificity to tRNAs. The chain is RNA-binding protein Hfq from Brucella abortus (strain S19).